The sequence spans 296 residues: NAD kinase (296 aa).

The active-site Proton acceptor is the D72. Residues 72-73, 146-147, R157, K174, D176, 187-192, and Q247 contribute to the NAD(+) site; these read DG, ND, and TAYALS.

Belongs to the NAD kinase family. The cofactor is a divalent metal cation.

The protein resides in the cytoplasm. The catalysed reaction is NAD(+) + ATP = ADP + NADP(+) + H(+). Its function is as follows. Involved in the regulation of the intracellular balance of NAD and NADP, and is a key enzyme in the biosynthesis of NADP. Catalyzes specifically the phosphorylation on 2'-hydroxyl of the adenosine moiety of NAD to yield NADP. This is NAD kinase from Pseudomonas entomophila (strain L48).